A 64-amino-acid polypeptide reads, in one-letter code: Temporin-ALh (64 aa).

A signal peptide spans 1–22; the sequence is MFPLKKSLLLLFFLATINLSLC. The propeptide occupies 23–46; that stretch reads EQERNAEEERRDEPDERNAEVEKR. A Serine amide modification is found at S62.

The protein belongs to the frog skin active peptide (FSAP) family. Temporin subfamily. As to expression, expressed by the skin glands.

The protein resides in the secreted. Its function is as follows. Antimicrobial peptide with activity against Gram-positive and Gram-negative bacteria and against fungi. Has been tested against S.aureus (MIC=2.5 ug/mL), B.pumilus (MIC=7.5 ug/mL), B.cereus (MIC=75.0 ug/mL), E.coli (MIC=5.0 ug/mL), B.dysenteriae (MIC=20.0 ug/mL), A.cacoaceticus (MIC=60.0 ug/mL), P.aeruginosa (MIC=2.5 ug/mL) and C.albicans (MIC=2.5 ug/mL). Also shows a weak hemolytic activity. This is Temporin-ALh from Amolops loloensis (Lolokou Sucker Frog).